A 256-amino-acid chain; its full sequence is DNA repair protein RecO (256 aa).

It belongs to the RecO family.

Involved in DNA repair and RecF pathway recombination. This is DNA repair protein RecO from Rhizobium etli (strain CIAT 652).